A 158-amino-acid polypeptide reads, in one-letter code: 6,7-dimethyl-8-ribityllumazine synthase (158 aa).

5-amino-6-(D-ribitylamino)uracil-binding positions include Phe-22, 57 to 59 (AVE), and 81 to 83 (AVI). 86-87 (GT) lines the (2S)-2-hydroxy-3-oxobutyl phosphate pocket. The active-site Proton donor is the His-89. Position 114 (Phe-114) interacts with 5-amino-6-(D-ribitylamino)uracil. Residue Arg-128 participates in (2S)-2-hydroxy-3-oxobutyl phosphate binding.

It belongs to the DMRL synthase family. In terms of assembly, forms an icosahedral capsid composed of 60 subunits, arranged as a dodecamer of pentamers.

It carries out the reaction (2S)-2-hydroxy-3-oxobutyl phosphate + 5-amino-6-(D-ribitylamino)uracil = 6,7-dimethyl-8-(1-D-ribityl)lumazine + phosphate + 2 H2O + H(+). It functions in the pathway cofactor biosynthesis; riboflavin biosynthesis; riboflavin from 2-hydroxy-3-oxobutyl phosphate and 5-amino-6-(D-ribitylamino)uracil: step 1/2. Its function is as follows. Catalyzes the formation of 6,7-dimethyl-8-ribityllumazine by condensation of 5-amino-6-(D-ribitylamino)uracil with 3,4-dihydroxy-2-butanone 4-phosphate. This is the penultimate step in the biosynthesis of riboflavin. The chain is 6,7-dimethyl-8-ribityllumazine synthase from Shewanella piezotolerans (strain WP3 / JCM 13877).